The primary structure comprises 467 residues: Pentatricopeptide repeat-containing protein At1g77170, mitochondrial (467 aa).

A mitochondrion-targeting transit peptide spans 1-30 (MFFSGLISKLHVHGTKRTNHFTIFHRLNHF). PPR repeat units follow at residues 81 to 115 (IAFLWNNIMRSYIRHESPLDAIQVYLGMVRSTVLP), 116 to 150 (DRYSLPIVIKAAVQIHDFTLGKELHSVAVRLGFVG), 151 to 181 (DEFCESGFITLYCKAGEFENARKVFDENPER), 182 to 216 (KLGSWNAIIGGLNHAGRANEAVEMFVDMKRSGLEP), 217 to 251 (DDFTMVSVTASCGGLGDLSLAFQLHKCVLQAKTEE), 254 to 284 (DIMMLNSLIDMYGKCGRMDLASHIFEEMRQR), 285 to 319 (NVVSWSSMIVGYAANGNTLEALECFRQMREFGVRP), 320 to 350 (NKITFVGVLSACVHGGLVEEGKTYFAMMKSE), and 356 to 386 (GLSHYGCIVDLLSRDGQLKEAKKVVEEMPMK). The interval 391–466 (VWGCLMGGCE…IPAYSYASTT (76 aa)) is type E motif.

Belongs to the PPR family. PCMP-E subfamily.

Its subcellular location is the mitochondrion. The sequence is that of Pentatricopeptide repeat-containing protein At1g77170, mitochondrial (PCMP-E21) from Arabidopsis thaliana (Mouse-ear cress).